The following is a 231-amino-acid chain: Ureidoacrylate amidohydrolase RutB (231 aa).

The active-site Proton acceptor is the D25. The active site involves K134. C167 acts as the Nucleophile in catalysis.

This sequence belongs to the isochorismatase family. RutB subfamily.

It catalyses the reaction (Z)-3-ureidoacrylate + H2O + H(+) = (Z)-3-aminoacrylate + NH4(+) + CO2. The enzyme catalyses (Z)-3-ureidoacrylate + H2O = (Z)-3-aminoacrylate + carbamate + H(+). It carries out the reaction (Z)-2-methylureidoacrylate + H2O + H(+) = (Z)-2-methylaminoacrylate + NH4(+) + CO2. Its function is as follows. Hydrolyzes ureidoacrylate to form aminoacrylate and carbamate. The carbamate hydrolyzes spontaneously, thereby releasing one of the nitrogen atoms of the pyrimidine ring as ammonia and one of its carbon atoms as CO2. The chain is Ureidoacrylate amidohydrolase RutB from Escherichia coli O139:H28 (strain E24377A / ETEC).